The primary structure comprises 396 residues: Elongation factor Tu (396 aa).

The region spanning 10 to 206 is the tr-type G domain; sequence KPHCNIGTIG…AVDAYIPQPE (197 aa). The interval 19-26 is G1; that stretch reads GHVDHGKT. 19–26 provides a ligand contact to GTP; it reads GHVDHGKT. Residue Thr26 participates in Mg(2+) binding. A G2 region spans residues 60 to 64; the sequence is GITIS. A G3 region spans residues 81–84; that stretch reads DCPG. Residues 81–85 and 136–139 each bind GTP; these read DCPGH and NKVD. The segment at 136–139 is G4; the sequence is NKVD. The interval 174 to 176 is G5; sequence SAL.

This sequence belongs to the TRAFAC class translation factor GTPase superfamily. Classic translation factor GTPase family. EF-Tu/EF-1A subfamily. Monomer.

It localises to the cytoplasm. The enzyme catalyses GTP + H2O = GDP + phosphate + H(+). Its function is as follows. GTP hydrolase that promotes the GTP-dependent binding of aminoacyl-tRNA to the A-site of ribosomes during protein biosynthesis. The polypeptide is Elongation factor Tu (Parvibaculum lavamentivorans (strain DS-1 / DSM 13023 / NCIMB 13966)).